The chain runs to 436 residues: tRNA(Ile)-lysidine synthase (436 aa).

Residue 21–26 coordinates ATP; the sequence is SGGVDS.

The protein belongs to the tRNA(Ile)-lysidine synthase family.

It is found in the cytoplasm. It carries out the reaction cytidine(34) in tRNA(Ile2) + L-lysine + ATP = lysidine(34) in tRNA(Ile2) + AMP + diphosphate + H(+). In terms of biological role, ligates lysine onto the cytidine present at position 34 of the AUA codon-specific tRNA(Ile) that contains the anticodon CAU, in an ATP-dependent manner. Cytidine is converted to lysidine, thus changing the amino acid specificity of the tRNA from methionine to isoleucine. The sequence is that of tRNA(Ile)-lysidine synthase from Aster yellows witches'-broom phytoplasma (strain AYWB).